A 478-amino-acid chain; its full sequence is Allene oxide synthase 2 (478 aa).

Residues lysine 88, histidine 119, and lysine 123 each contribute to the heme b site. Asparagine 278 is a (13S)-hydroperoxy-(9Z,11E,15Z)-octadecatrienoate binding site. Residues lysine 427 and cysteine 429 each contribute to the heme b site.

This sequence belongs to the cytochrome P450 family. Heme b serves as cofactor. Weakly expressed in roots, shoots, leaves and flowers.

The catalysed reaction is (13S)-hydroperoxy-(9Z,11E,15Z)-octadecatrienoate = (9Z,13S,15Z)-12,13-epoxyoctadeca-9,11,15-trienoate + H2O. It participates in lipid metabolism; oxylipin biosynthesis. In terms of biological role, involved in the biosynthesis of jasmonic acid, a growth regulator that is implicated also as a signaling molecule in plant defense. Converts 13-hydroperoxylinolenic acid to 12,13-epoxylinolenic acid. The protein is Allene oxide synthase 2 (CYP74A2) of Oryza sativa subsp. japonica (Rice).